The chain runs to 900 residues: DNA mismatch repair protein MutS (900 aa).

637–644 (GPNMAGKS) is an ATP binding site.

This sequence belongs to the DNA mismatch repair MutS family.

In terms of biological role, this protein is involved in the repair of mismatches in DNA. It is possible that it carries out the mismatch recognition step. This protein has a weak ATPase activity. This is DNA mismatch repair protein MutS from Methanosarcina barkeri (strain Fusaro / DSM 804).